The chain runs to 625 residues: RecQ-mediated genome instability protein 1 (625 aa).

Residue Met1 is modified to N-acetylmethionine. Ser225 carries the post-translational modification Phosphoserine. The segment at Leu257–Gln282 is disordered. 2 positions are modified to phosphoserine: Ser284 and Ser292. Residues Lys334, Lys387, and Lys426 each participate in a glycyl lysine isopeptide (Lys-Gly) (interchain with G-Cter in SUMO2) cross-link.

The protein belongs to the RMI1 family. In terms of assembly, component of the RMI complex, containing at least TOP3A, RMI1 and RMI2. The RMI complex interacts with BLM. Directly interacts with RMI2 and TOP3A. May bind DHJ. Interacts (via N-terminal region) with BLM; the interaction is direct.

The protein localises to the nucleus. Its function is as follows. Essential component of the RMI complex, a complex that plays an important role in the processing of homologous recombination intermediates to limit DNA crossover formation in cells. Promotes TOP3A binding to double Holliday junctions (DHJ) and hence stimulates TOP3A-mediated dissolution. Required for BLM phosphorylation during mitosis. Within the BLM complex, required for BLM and TOP3A stability. This Homo sapiens (Human) protein is RecQ-mediated genome instability protein 1 (RMI1).